Consider the following 162-residue polypeptide: Ribosomal RNA large subunit methyltransferase H (162 aa).

S-adenosyl-L-methionine is bound by residues L78, G109, and 128-133 (LSALTL).

This sequence belongs to the RNA methyltransferase RlmH family. As to quaternary structure, homodimer.

It localises to the cytoplasm. The enzyme catalyses pseudouridine(1915) in 23S rRNA + S-adenosyl-L-methionine = N(3)-methylpseudouridine(1915) in 23S rRNA + S-adenosyl-L-homocysteine + H(+). Its function is as follows. Specifically methylates the pseudouridine at position 1915 (m3Psi1915) in 23S rRNA. The polypeptide is Ribosomal RNA large subunit methyltransferase H (Psychrobacter arcticus (strain DSM 17307 / VKM B-2377 / 273-4)).